The primary structure comprises 227 residues: Phosphoglycolate phosphatase (227 aa).

The Nucleophile role is filled by D13. Residues D13, D15, and D176 each coordinate Mg(2+).

This sequence belongs to the HAD-like hydrolase superfamily. CbbY/CbbZ/Gph/YieH family. The cofactor is Mg(2+).

It carries out the reaction 2-phosphoglycolate + H2O = glycolate + phosphate. It functions in the pathway organic acid metabolism; glycolate biosynthesis; glycolate from 2-phosphoglycolate: step 1/1. In terms of biological role, specifically catalyzes the dephosphorylation of 2-phosphoglycolate. Is involved in the dissimilation of the intracellular 2-phosphoglycolate formed during the DNA repair of 3'-phosphoglycolate ends, a major class of DNA lesions induced by oxidative stress. This chain is Phosphoglycolate phosphatase, found in Nitrosospira multiformis (strain ATCC 25196 / NCIMB 11849 / C 71).